Consider the following 216-residue polypeptide: Noggin-1 (216 aa).

The first 18 residues, 1-18, serve as a signal peptide directing secretion; it reads MDFPRFLLSAYLLLLSFA. Asparagine 55 carries N-linked (GlcNAc...) asparagine glycosylation.

Belongs to the noggin family. As to quaternary structure, homodimer; disulfide-linked.

It is found in the secreted. Functionally, inhibitor of bone morphogenetic proteins (BMP) signaling. May play an important role in the dorsoventral patterning of the embryo. The chain is Noggin-1 (nog1) from Danio rerio (Zebrafish).